We begin with the raw amino-acid sequence, 239 residues long: Regulator protein TubY (239 aa).

Residues 138 to 239 (INNTISQQLS…KGFFGKLFKR (102 aa)) are required to bind TubZ. Residues 150 to 229 (LNAHNEALEQ…KQQNEEQNNK (80 aa)) adopt a coiled-coil conformation. The segment covering 217 to 228 (EERKQQNEEQNN) has biased composition (basic and acidic residues). The interval 217 to 239 (EERKQQNEEQNNKKGFFGKLFKR) is disordered. Residues 229–239 (KKGFFGKLFKR) are compositionally biased toward low complexity.

In terms of assembly, forms homooctamers in the absence of the last 13 residues; the coiled coil domain is required for oligomerization. In the presence of GTP and Mg(2+) binds to TubZ and also to TubZ-TubR-tubC DNA; the latter is reshaped from large filament bundles to rings of 30-40 nm diameter.

The protein localises to the host cytoplasm. A probable TubZ filament regulator that is part of the type III partition system presumably used to ensure correct segregation of this bacteriophage. Binds to TubZ in the presence of GTP and Mg(2+), and to TubZ-TubR-tubC (tubC is the centromere-like site). The latter complex is reshaped from large bundles to rings by TubY. Modifies TubZ filaments formed in the presence of GDP to make them thinner and more flexible; in GDP and lacking the last 8 residues of TubZ makes rings without TubT-tubC. This chain is Regulator protein TubY, found in Clostridium botulinum C (Clostridium botulinum C bacteriophage).